We begin with the raw amino-acid sequence, 306 residues long: MELVFLGTGAGVPSRGRNVTSIALSMLNERNAIWLFDCGEATQHQIMRSQIKLSKLEKIFITHLHGDHIFGLPGLLSSRSFQGGESDLTIYGPVGITEYVETSLRLSGTRLTYKIIFNEIEPGLIFEDKMFSITVDELDHGLRSFGYRIVEKDKPGALNADKLIEDGVEPGPIFQKIKKGETVTLADGSVINGKDYIDEPQKGKIISIFGDTKATASELELALNADVLVHEATFEGDKEKLAGEYMHSTTLQAASLAKKANVKKLILTHISSRYDRDASKELLIEAQSVFENTEIAYDLAVFPIGE.

Zn(2+) is bound by residues H63, H65, D67, H68, H140, D211, and H269. D67 (proton acceptor) is an active-site residue.

Belongs to the RNase Z family. In terms of assembly, homodimer. Requires Zn(2+) as cofactor.

It carries out the reaction Endonucleolytic cleavage of RNA, removing extra 3' nucleotides from tRNA precursor, generating 3' termini of tRNAs. A 3'-hydroxy group is left at the tRNA terminus and a 5'-phosphoryl group is left at the trailer molecule.. In terms of biological role, zinc phosphodiesterase, which displays some tRNA 3'-processing endonuclease activity. Probably involved in tRNA maturation, by removing a 3'-trailer from precursor tRNA. This is Ribonuclease Z from Listeria monocytogenes serotype 4a (strain HCC23).